The sequence spans 103 residues: Co-chaperonin GroES (103 aa).

Belongs to the GroES chaperonin family. Heptamer of 7 subunits arranged in a ring. Interacts with the chaperonin GroEL.

The protein localises to the cytoplasm. In terms of biological role, together with the chaperonin GroEL, plays an essential role in assisting protein folding. The GroEL-GroES system forms a nano-cage that allows encapsulation of the non-native substrate proteins and provides a physical environment optimized to promote and accelerate protein folding. GroES binds to the apical surface of the GroEL ring, thereby capping the opening of the GroEL channel. This is Co-chaperonin GroES from Synechococcus sp. (strain JA-2-3B'a(2-13)) (Cyanobacteria bacterium Yellowstone B-Prime).